Reading from the N-terminus, the 271-residue chain is Shikimate dehydrogenase (NADP(+)) (271 aa).

Residues 15 to 17 and Thr62 contribute to the shikimate site; that span reads SKS. Residue Lys66 is the Proton acceptor of the active site. Glu78 lines the NADP(+) pocket. Shikimate-binding residues include Asn87 and Asp103. NADP(+) is bound by residues 127 to 131, 151 to 156, and Met214; these read GAGGA and NRTQAK. Tyr216 provides a ligand contact to shikimate. An NADP(+)-binding site is contributed by Gly238.

Belongs to the shikimate dehydrogenase family. In terms of assembly, homodimer.

The enzyme catalyses shikimate + NADP(+) = 3-dehydroshikimate + NADPH + H(+). The protein operates within metabolic intermediate biosynthesis; chorismate biosynthesis; chorismate from D-erythrose 4-phosphate and phosphoenolpyruvate: step 4/7. Its function is as follows. Involved in the biosynthesis of the chorismate, which leads to the biosynthesis of aromatic amino acids. Catalyzes the reversible NADPH linked reduction of 3-dehydroshikimate (DHSA) to yield shikimate (SA). This chain is Shikimate dehydrogenase (NADP(+)), found in Shewanella pealeana (strain ATCC 700345 / ANG-SQ1).